Reading from the N-terminus, the 2472-residue chain is Spectrin alpha chain, non-erythrocytic 1 (2472 aa).

Met1 carries the N-acetylmethionine modification. Spectrin repeat units follow at residues 45–146 (RFQF…IKLL), 150–251 (KLVQ…QGKL), 256–358 (EVQR…ARLN), 361–465 (YRLQ…QYEQ), 468–570 (DLQL…AQLA), 574–676 (HLQQ…KLRE), 679–781 (QQQQ…QKLA), 785–888 (RLQQ…DLED), and 891–969 (QAQQ…ETGK). Ser587 carries the phosphoserine modification. Lys637 carries the N6-acetyllysine modification. Residue Lys803 is modified to N6-acetyllysine. Residues Ser924, Ser982, Ser999, Ser1029, Ser1031, and Ser1041 each carry the phosphoserine modification. One can recognise an SH3 domain in the interval 967-1026 (TGKELVLALYDYQEKSPREVTMKKGDILTLLNSTNKDWWKVEVNDRQGFVPAAYVKKLDP). The stretch at 1096–1166 (LFREANELQQ…LESEGLMAEE (71 aa)) is one Spectrin 10 repeat. Position 1176 is a phosphotyrosine (Tyr1176). Phosphoserine occurs at positions 1190, 1207, 1217, 1291, 1306, 1323, and 1338. The Spectrin 11 repeat unit spans residues 1233 to 1336 (HEVQRFHRDA…RADQRKAKLG (104 aa)). Spectrin repeat units lie at residues 1339 to 1442 (HDLQ…MMLD) and 1446 to 1549 (ELQL…KLGE). N6-acetyllysine is present on Lys1519. Phosphoserine occurs at positions 1550, 1557, 1578, 1615, and 1647. Spectrin repeat units follow at residues 1552–1656 (TLQQ…KLKE), 1659–1762 (KQQN…KLNE), 1764–1868 (HRLH…RLEE), 1871–1974 (EYQQ…KLDE), 1978–2081 (FLQF…KLLE), 2092–2194 (LFLT…LELQ), and 2206–2310 (LRQE…NLEQ). Phosphothreonine is present on Thr2020. Lys2052 bears the N6-acetyllysine mark. EF-hand domains lie at 2323 to 2358 (EALK…LGYD), 2366 to 2401 (EPDP…RETE), and 2404 to 2439 (KSSE…EQAD). Ca(2+) is bound by residues Asp2336, Asp2338, Ser2340, Arg2342, Glu2347, Asp2379, Asn2381, Asp2383, His2385, and Glu2390. Lys2421 carries the post-translational modification N6-acetyllysine.

This sequence belongs to the spectrin family. Like erythrocyte spectrin, the spectrin-like proteins are capable of forming dimers which can further associate to tetramers. Interacts (via C-terminal spectrin repeats) with TRPC4. Interacts with CALM and EMD. Interacts with isoform 1 of ACP1. Identified in a complex with ACTN4, CASK, IQGAP1, MAGI2, NPHS1 and SPTBN1. Interacts with SHANK3 (via ANK repeats). Interacts with CLN3; this interaction regulates the fodrin localization at the plasma membrane. Post-translationally, phosphorylation of Tyr-1176 decreases sensitivity to cleavage by calpain in vitro.

Its subcellular location is the cytoplasm. The protein localises to the cytoskeleton. It is found in the cell cortex. Functionally, fodrin, which seems to be involved in secretion, interacts with calmodulin in a calcium-dependent manner and is thus candidate for the calcium-dependent movement of the cytoskeleton at the membrane. The polypeptide is Spectrin alpha chain, non-erythrocytic 1 (SPTAN1) (Homo sapiens (Human)).